Consider the following 95-residue polypeptide: Cytosolic calcium-binding protein 3 (95 aa).

Tandem repeats lie at residues 30-35 (VEDAEK), 39-43 (DEEEK), 54-59 (VEEEKK), 67-71 (PEEKK), 75-79 (LEEKQ), and 90-94 (VEKAK). The segment at 30-94 (VEDAEKTNED…AEEVAVEKAK (65 aa)) is 6 X 5 AA approximate repeats of V-E-E-K-K. Positions 54-95 (VEEEKKAEEVTETPEEKKTEALEEKQTEVAAAEEVAVEKAKE) are disordered. Basic and acidic residues predominate over residues 55–80 (EEEKKAEEVTETPEEKKTEALEEKQT).

As to expression, low levels in roots (e.g. in cambium) and barely expressed in stems, shoots, flowers, siliques and leaves.

Its subcellular location is the cytoplasm. It localises to the cytosol. Binds calcium Ca(2+) and may act as a signal mediator to buffer Ca(2+). This is Cytosolic calcium-binding protein 3 from Arabidopsis thaliana (Mouse-ear cress).